Consider the following 66-residue polypeptide: Small ribosomal subunit protein bS21 (66 aa).

This sequence belongs to the bacterial ribosomal protein bS21 family.

The protein is Small ribosomal subunit protein bS21 of Maridesulfovibrio salexigens (strain ATCC 14822 / DSM 2638 / NCIMB 8403 / VKM B-1763) (Desulfovibrio salexigens).